The primary structure comprises 147 residues: Hemoglobin subunit beta (147 aa).

Val2 is modified (N-acetylvaline). The Globin domain occupies 3 to 147 (HLTPDEKAAV…VANALAHKYH (145 aa)). Thr13 carries the phosphothreonine modification. At Ser45 the chain carries Phosphoserine. Position 60 is an N6-acetyllysine (Lys60). His64 serves as a coordination point for heme b. At Lys83 the chain carries N6-acetyllysine. His93 is a binding site for heme b. Cys94 is subject to S-nitrosocysteine. Lys145 bears the N6-acetyllysine mark.

This sequence belongs to the globin family. In terms of assembly, heterotetramer of two alpha chains and two beta chains. Red blood cells.

Functionally, involved in oxygen transport from the lung to the various peripheral tissues. This Colobus polykomos (Western black-and-white colobus monkey) protein is Hemoglobin subunit beta (HBB).